The primary structure comprises 289 residues: ATP synthase gamma chain (289 aa).

This sequence belongs to the ATPase gamma chain family. In terms of assembly, F-type ATPases have 2 components, CF(1) - the catalytic core - and CF(0) - the membrane proton channel. CF(1) has five subunits: alpha(3), beta(3), gamma(1), delta(1), epsilon(1). CF(0) has three main subunits: a, b and c.

The protein localises to the cell inner membrane. Its function is as follows. Produces ATP from ADP in the presence of a proton gradient across the membrane. The gamma chain is believed to be important in regulating ATPase activity and the flow of protons through the CF(0) complex. The sequence is that of ATP synthase gamma chain from Acinetobacter baumannii (strain AB307-0294).